A 314-amino-acid polypeptide reads, in one-letter code: F-box protein AUF2 (314 aa).

One can recognise an F-box domain in the interval Met1–Leu49.

As to quaternary structure, part of a SCF (ASK-cullin-F-box) protein ligase complex.

The protein localises to the nucleus. Its pathway is protein modification; protein ubiquitination. Functionally, component of SCF(ASK-cullin-F-box) E3 ubiquitin ligase complexes, which may mediate the ubiquitination and subsequent proteasomal degradation of target proteins. The protein is F-box protein AUF2 of Arabidopsis thaliana (Mouse-ear cress).